The following is a 1403-amino-acid chain: Baculoviral IAP repeat-containing protein 1f (1403 aa).

BIR repeat units lie at residues 60–127 (EAKR…CEFL), 159–227 (EEAR…CEFL), and 278–345 (EELR…CVFL). Cysteine 315, cysteine 318, histidine 335, and cysteine 342 together coordinate Zn(2+). The NACHT domain maps to 464–759 (SVMCVEGEAG…EFLAAVRLTE (296 aa)). ATP is bound at residue 473–478 (GSGKTT).

As to quaternary structure, component of the NLRC4 inflammasome, at least composed of NLRC4, caspase-1 (CASP1) and some NAIP protein. (Microbial infection) Interacts with S.typhimurium (Salmonella) flagellin.

Its function is as follows. Sensor component of the NLRC4 inflammasome that specifically recognizes and binds flagellin from pathogenic bacteria. Association of pathogenic bacteria proteins drives in turn drive assembly and activation of the NLRC4 inflammasome, promoting caspase-1 activation, cytokine production and macrophage pyroptosis. The NLRC4 inflammasome is activated as part of the innate immune response to a range of intracellular bacteria. The NLRC4 inflammasome senses Gram-negative bacteria such as L.pneumophila and P.aeruginosa, enteric pathogens S.typhimurium (Salmonella) and S.flexneri. May contribute to prevent motor-neuron apoptosis induced by a variety of signals. The sequence is that of Baculoviral IAP repeat-containing protein 1f (Naip6) from Mus musculus (Mouse).